The primary structure comprises 89 residues: UPF0297 protein SMU_2079c (89 aa).

It belongs to the UPF0297 family.

The polypeptide is UPF0297 protein SMU_2079c (Streptococcus mutans serotype c (strain ATCC 700610 / UA159)).